The primary structure comprises 210 residues: Adenylate kinase (210 aa).

Residue 10–15 (GSGKGT) participates in ATP binding. Residues 28–57 (SVGKVLRTVMESNTAEADVVKKFIKSGKLV) are NMP. AMP-binding positions include R34, 55-57 (KLV), 83-86 (GYPR), and Q90. The LID stretch occupies residues 120–158 (GRISCTDCGTIYNKLYCMPKINGVCDICNSSSFQNRVDD). Position 121 (R121) interacts with ATP. 2 residues coordinate Zn(2+): C124 and C127. 130 to 131 (IY) lines the ATP pocket. Residues C144 and C147 each coordinate Zn(2+). 2 residues coordinate AMP: R155 and R166. Position 194 (Q194) interacts with ATP.

The protein belongs to the adenylate kinase family. Monomer.

It localises to the cytoplasm. The enzyme catalyses AMP + ATP = 2 ADP. Its pathway is purine metabolism; AMP biosynthesis via salvage pathway; AMP from ADP: step 1/1. Catalyzes the reversible transfer of the terminal phosphate group between ATP and AMP. Plays an important role in cellular energy homeostasis and in adenine nucleotide metabolism. This Orientia tsutsugamushi (strain Boryong) (Rickettsia tsutsugamushi) protein is Adenylate kinase.